The primary structure comprises 2541 residues: Highly reducing polyketide synthase otaA (2541 aa).

Positions 9–431 constitute a Ketosynthase family 3 (KS3) domain; it reads SEPLAIIGLA…GTNAHVVLED (423 aa). Active-site for beta-ketoacyl synthase activity residues include Cys-182, His-317, and His-355. The Malonyl-CoA:ACP transacylase (MAT) domain maps to 571 to 888; sequence FIFTGQGANW…GSLLKRYETD (318 aa). The N-terminal hotdog fold stretch occupies residues 957–1092; it reads HELLGVPVED…GSVRVETGPH (136 aa). The interval 957 to 1251 is dehydratase (DH) domain; the sequence is HELLGVPVED…GLDLVQLPPS (295 aa). The PKS/mFAS DH domain maps to 957-1254; the sequence is HELLGVPVED…LVQLPPSEDA (298 aa). The interval 1108–1254 is C-terminal hotdog fold; the sequence is TESVDIAQMY…LVQLPPSEDA (147 aa). Positions 1420 and 1442 each coordinate S-adenosyl-L-methionine. The methyltransferase (CMeT) domain stretch occupies residues 1433–1605; it reads HAQTGIKVLE…DQELRNAGLQ (173 aa). One can recognise an Enoyl reductase (ER) domain in the interval 1838 to 2141; sequence HQPNGFHFVE…RQGNAGPWVL (304 aa). The region spanning 2165–2344 is the Ketoreductase (KR) domain; sequence ASYLLIGGFG…PATSISLGSV (180 aa). Residues 2453 to 2530 form the Carrier domain; that stretch reads DAVELVTRAI…QLAQQAAGGS (78 aa). Ser-2490 carries the post-translational modification O-(pantetheine 4'-phosphoryl)serine.

Requires pantetheine 4'-phosphate as cofactor.

The catalysed reaction is 4 malonyl-CoA + acetyl-CoA + 5 NADPH + 9 H(+) = 7-methylmellein + 3 CO2 + 5 NADP(+) + 5 CoA + 4 H2O. Its pathway is mycotoxin biosynthesis. Highly reducing polyketide synthase; part of the gene cluster that mediates the biosynthesis of ochratoxin A (OTA), a mycotoxin composed of a chlorinated type I polyketide dihydroisocoumarin moiety linked to L-phenylalanine, and demonstrated to have nephrotoxic, immunotoxic, genotoxic, neurotoxic, and teratogenic properties. OtaA catalyzes the condensation of one acetate and 4 malonate units to form the isocoumarin group. The pathway begins with the highly reducing polyketide synthase otaA that catalyzes the formation of the isocoumarin group during the initial stages of biosynthesis, starting from one acetate and 4 malonate units, to originate the characteristic pentaketide skeleton 7-methylmellein (7-MM) of the OTA molecule. The newly identified cyclase otaY might be involved in the polyketide cyclization reaction during the initial steps of the OTA biosynthesis. 7-MM is then oxidized into 7-carboxymellein (also called ochratoxin beta) by the cytochrome P450 monooxygenase otaC. The NRPS encoded by the otaB gene is involved in the linking of phenylalanine to the dihydroisocoumarin ring. The reaction catalyzed by NRPS results in the production of ochratoxin B (OTB), which is the non-chlorinated analog of OTA and which subsequently serves as the substrate of the halogenase otaD for chlorination activity to form the final molecular structure of OTA, containing a chlorine atom in the C-5 position of the molecule. The protein is Highly reducing polyketide synthase otaA of Aspergillus carbonarius (strain ITEM 5010).